Consider the following 338-residue polypeptide: uncharacterized protein (338 aa).

Positions 1 to 29 (MIKQLYKNITICSLAISTALTVFPATSYA) are cleaved as a signal peptide.

It belongs to the aerolysin family.

This is an uncharacterized protein from Staphylococcus aureus (strain Mu50 / ATCC 700699).